The primary structure comprises 431 residues: Tyrosine--tRNA ligase (431 aa).

Y34 is an L-tyrosine binding site. A 'HIGH' region motif is present at residues 39–48 (PTADSLHIGH). Residues Y171 and Q175 each coordinate L-tyrosine. Residues 231–235 (KFGKT) carry the 'KMSKS' region motif. K234 contacts ATP. Residues 353 to 422 (INAVEALVKT…GKYTILRRGK (70 aa)) enclose the S4 RNA-binding domain.

Belongs to the class-I aminoacyl-tRNA synthetase family. TyrS type 1 subfamily. As to quaternary structure, homodimer.

The protein resides in the cytoplasm. It catalyses the reaction tRNA(Tyr) + L-tyrosine + ATP = L-tyrosyl-tRNA(Tyr) + AMP + diphosphate + H(+). Functionally, catalyzes the attachment of tyrosine to tRNA(Tyr) in a two-step reaction: tyrosine is first activated by ATP to form Tyr-AMP and then transferred to the acceptor end of tRNA(Tyr). The protein is Tyrosine--tRNA ligase of Neisseria gonorrhoeae (strain ATCC 700825 / FA 1090).